Consider the following 180-residue polypeptide: MANRLKEKYLNEVVPALTEQFNYSSVMAVPKVDKIVLNMGVGEAVSNAKSLEKAAEELALISGQKPLITKAKKSIAGFRLREGVAIGAKVTLRGERMYEFLDKLVSVSLPRVRDFHGVPTKSFDGRGNYTLGVKEQLIFPEINFDDVDKTRGLDIVIVTTANTDEESRALLTGLGMPFAK.

Belongs to the universal ribosomal protein uL5 family. Part of the 50S ribosomal subunit; part of the 5S rRNA/L5/L18/L25 subcomplex. Contacts the 5S rRNA and the P site tRNA. Forms a bridge to the 30S subunit in the 70S ribosome.

Functionally, this is one of the proteins that bind and probably mediate the attachment of the 5S RNA into the large ribosomal subunit, where it forms part of the central protuberance. In the 70S ribosome it contacts protein S13 of the 30S subunit (bridge B1b), connecting the 2 subunits; this bridge is implicated in subunit movement. Contacts the P site tRNA; the 5S rRNA and some of its associated proteins might help stabilize positioning of ribosome-bound tRNAs. The polypeptide is Large ribosomal subunit protein uL5 (Streptococcus pneumoniae (strain JJA)).